The following is a 245-amino-acid chain: 1-(5-phosphoribosyl)-5-[(5-phosphoribosylamino)methylideneamino] imidazole-4-carboxamide isomerase (245 aa).

The active-site Proton acceptor is the Asp-11. Asp-132 serves as the catalytic Proton donor.

This sequence belongs to the HisA/HisF family.

It is found in the cytoplasm. It carries out the reaction 1-(5-phospho-beta-D-ribosyl)-5-[(5-phospho-beta-D-ribosylamino)methylideneamino]imidazole-4-carboxamide = 5-[(5-phospho-1-deoxy-D-ribulos-1-ylimino)methylamino]-1-(5-phospho-beta-D-ribosyl)imidazole-4-carboxamide. Its pathway is amino-acid biosynthesis; L-histidine biosynthesis; L-histidine from 5-phospho-alpha-D-ribose 1-diphosphate: step 4/9. The chain is 1-(5-phosphoribosyl)-5-[(5-phosphoribosylamino)methylideneamino] imidazole-4-carboxamide isomerase from Bacillus velezensis (strain DSM 23117 / BGSC 10A6 / LMG 26770 / FZB42) (Bacillus amyloliquefaciens subsp. plantarum).